The following is a 429-amino-acid chain: Zygotic gap protein knirps (429 aa).

Positions 2–78 (NQTCKVCGEP…VGMSKGGSRY (77 aa)) form a DNA-binding region, nuclear receptor. 2 consecutive NR C4-type zinc fingers follow at residues 5–25 (CKVC…CEGC) and 42–66 (CKNE…LRKC). Residues 112–126 (SVGGAPSASSPVGSP) show a composition bias toward low complexity. Disordered stretches follow at residues 112–148 (SVGG…QQQQ), 223–250 (QSVD…SSAR), 338–357 (TSRS…QEVE), and 375–397 (SSSS…AEVK). Polar residues-rich tracts occupy residues 225–237 (VDSV…FSPA) and 338–349 (TSRSSVHSFNDS). Residues 375–393 (SSSSSSHSAAHSPNTTTAH) are compositionally biased toward low complexity.

This sequence belongs to the nuclear hormone receptor family. NR0 subfamily.

It localises to the nucleus. Its function is as follows. Transcriptional repressor. Binds to multiple sites in the eve stripe 3 enhancer element. Plays an essential role in the segmentation process both by refining the expression patterns of gap genes and by establishing pair-rules stripes of gene expression. In Drosophila melanogaster (Fruit fly), this protein is Zygotic gap protein knirps (kni).